We begin with the raw amino-acid sequence, 473 residues long: ATP synthase subunit beta (473 aa).

158-165 (GGAGVGKT) lines the ATP pocket.

Belongs to the ATPase alpha/beta chains family. As to quaternary structure, F-type ATPases have 2 components, CF(1) - the catalytic core - and CF(0) - the membrane proton channel. CF(1) has five subunits: alpha(3), beta(3), gamma(1), delta(1), epsilon(1). CF(0) has three main subunits: a(1), b(2) and c(9-12). The alpha and beta chains form an alternating ring which encloses part of the gamma chain. CF(1) is attached to CF(0) by a central stalk formed by the gamma and epsilon chains, while a peripheral stalk is formed by the delta and b chains.

It localises to the cell membrane. It catalyses the reaction ATP + H2O + 4 H(+)(in) = ADP + phosphate + 5 H(+)(out). Functionally, produces ATP from ADP in the presence of a proton gradient across the membrane. The catalytic sites are hosted primarily by the beta subunits. The protein is ATP synthase subunit beta of Geobacillus stearothermophilus (Bacillus stearothermophilus).